Reading from the N-terminus, the 142-residue chain is gSG7 salivary protein (142 aa).

The first 26 residues, 1-26, serve as a signal peptide directing secretion; sequence MAVRMTVILPLAMALICLMQAEPATA. 2 disulfides stabilise this stretch: Cys84–Cys139 and Cys107–Cys117.

In terms of assembly, associates with activated host C3-convertase complex C3bBb (C3-CFB). Interacts with host properdin (CFP), a regulator of the alternate pathway of complement. In terms of tissue distribution, female salivary gland (at protein level).

It is found in the secreted. Its function is as follows. Salivary protein that potently inhibits the alternative pathway of complement system activation in the host while having no inhibitory effect on the classical or lectin pathways. Binds and stabilizes activated host C3-convertase complex C3bBb (C3-CFB) and inhibits its convertase activity. Enhances accumulation of C3bBb on immobilized properdin. This is gSG7 salivary protein from Anopheles albimanus (New world malaria mosquito).